We begin with the raw amino-acid sequence, 469 residues long: Ribulose bisphosphate carboxylase large chain (469 aa).

Residues 1-2 (MS) constitute a propeptide that is removed on maturation. At P3 the chain carries N-acetylproline. K14 is subject to N6,N6,N6-trimethyllysine. N123 and T173 together coordinate substrate. Residue K175 is the Proton acceptor of the active site. K177 lines the substrate pocket. Residues K201, D203, and E204 each contribute to the Mg(2+) site. An N6-carboxylysine modification is found at K201. Catalysis depends on H294, which acts as the Proton acceptor. Substrate-binding residues include R295, H327, and S379.

This sequence belongs to the RuBisCO large chain family. Type I subfamily. As to quaternary structure, heterohexadecamer of 8 large chains and 8 small chains; disulfide-linked. The disulfide link is formed within the large subunit homodimers. It depends on Mg(2+) as a cofactor. In terms of processing, the disulfide bond which can form in the large chain dimeric partners within the hexadecamer appears to be associated with oxidative stress and protein turnover.

It localises to the plastid. It is found in the chloroplast. The enzyme catalyses 2 (2R)-3-phosphoglycerate + 2 H(+) = D-ribulose 1,5-bisphosphate + CO2 + H2O. The catalysed reaction is D-ribulose 1,5-bisphosphate + O2 = 2-phosphoglycolate + (2R)-3-phosphoglycerate + 2 H(+). Its function is as follows. RuBisCO catalyzes two reactions: the carboxylation of D-ribulose 1,5-bisphosphate, the primary event in carbon dioxide fixation, as well as the oxidative fragmentation of the pentose substrate in the photorespiration process. Both reactions occur simultaneously and in competition at the same active site. The chain is Ribulose bisphosphate carboxylase large chain from Brexia madagascariensis.